A 443-amino-acid polypeptide reads, in one-letter code: Cyclic AMP receptor 4 (443 aa).

Over Met-1–Tyr-11 the chain is Extracellular. Residue Asn-8 is glycosylated (N-linked (GlcNAc...) asparagine). Residues Ser-12–Phe-32 form a helical membrane-spanning segment. Over Lys-33 to Arg-44 the chain is Cytoplasmic. A helical membrane pass occupies residues Val-45–Leu-65. The Extracellular segment spans residues Ser-66 to Tyr-89. The helical transmembrane segment at Gly-90–Val-110 threads the bilayer. At Lys-111–Tyr-119 the chain is on the cytoplasmic side. A helical membrane pass occupies residues Glu-120 to Ala-140. The Extracellular portion of the chain corresponds to Lys-141–Arg-161. Residues Phe-162–Leu-182 traverse the membrane as a helical segment. The Cytoplasmic segment spans residues Thr-183 to Lys-208. Residues Leu-209–Leu-229 traverse the membrane as a helical segment. Residues Asn-230 to Pro-263 are Extracellular-facing. Residues Leu-264–Val-284 traverse the membrane as a helical segment. The Cytoplasmic segment spans residues Glu-285–Phe-443. Disordered stretches follow at residues Asn-325–Pro-354 and Ser-396–Phe-443. The span at Gln-332–Gln-352 shows a compositional bias: low complexity. A compositionally biased stretch (polar residues) spans Ser-396 to Glu-410. A compositionally biased stretch (low complexity) spans Asn-411–Asn-425. Positions Ile-429 to Phe-443 are enriched in basic and acidic residues.

Belongs to the G-protein coupled receptor 5 family. In terms of processing, C-terminal Ser or Thr residues may be phosphorylated.

It localises to the membrane. In terms of biological role, receptor for cAMP. Regulates axial patterning and cellular differentiation during late development. The activity of this receptor is mediated by G proteins. The chain is Cyclic AMP receptor 4 (carD) from Dictyostelium discoideum (Social amoeba).